The primary structure comprises 113 residues: Stigma/stylar cysteine-rich adhesin (113 aa).

A signal peptide spans 1–22 (MARSSAVCFLLLLAFLIGTASA). 4 cysteine pairs are disulfide-bonded: Cys-25–Cys-72, Cys-35–Cys-49, Cys-50–Cys-95, and Cys-70–Cys-109.

Belongs to the plant LTP family. Highly expressed in style and stigma, abundant in young leaves and petals, and low expression in young anthers at pollen mother cell stage with an active tapetum. Not expressed in mature leaves or in pollen grains or tubes. Found in the stylar transmitting tract epidermis and in the stylar extracellular matrix.

Acts as an adhesive agent between the pollen tube wall and the stylar transmitting tract epidermis. Binds a stylar pectin in a pH-dependent manner. Enhances activity of chemocyanin, a diffusible chemotropic factor. This Lilium longiflorum (Trumpet lily) protein is Stigma/stylar cysteine-rich adhesin (SCA).